A 106-amino-acid chain; its full sequence is Iron-sulfur cluster assembly protein CyaY (106 aa).

It belongs to the frataxin family.

Involved in iron-sulfur (Fe-S) cluster assembly. May act as a regulator of Fe-S biogenesis. The chain is Iron-sulfur cluster assembly protein CyaY from Yersinia pseudotuberculosis serotype O:3 (strain YPIII).